We begin with the raw amino-acid sequence, 388 residues long: Alcohol dehydrogenase-like 1 (388 aa).

Zn(2+) contacts are provided by Cys-53, Thr-55, His-76, Cys-106, Cys-109, Cys-112, Cys-120, and Cys-185. Thr-55 and His-76 together coordinate an alcohol. Thr-55 serves as a coordination point for NAD(+). Residues 210–215 (GLGAVG), Asp-234, Lys-239, 304–306 (LGM), Phe-331, and Arg-381 each bind NAD(+).

Belongs to the zinc-containing alcohol dehydrogenase family. Class-III subfamily. In terms of assembly, homodimer. Requires Zn(2+) as cofactor.

It localises to the cytoplasm. The catalysed reaction is a primary alcohol + NAD(+) = an aldehyde + NADH + H(+). It carries out the reaction a secondary alcohol + NAD(+) = a ketone + NADH + H(+). The sequence is that of Alcohol dehydrogenase-like 1 from Arabidopsis thaliana (Mouse-ear cress).